A 107-amino-acid polypeptide reads, in one-letter code: Envelope small membrane protein (107 aa).

Residues 1–11 (MMNLVNKSLEE) lie on the Virion surface side of the membrane. A helical membrane pass occupies residues 12-32 (NGSFLTAVYIFCAFVALYLLG). At 33–107 (RALHAFVQAA…NFQNDGKLHS (75 aa)) the chain is on the intravirion side.

This sequence belongs to the gammacoronaviruses E protein family. In terms of assembly, homooligomer. Interacts with the M membrane protein in the budding compartment of the host cell, which is located between endoplasmic reticulum and the Golgi complex. The cytoplasmic tails of both proteins are important for this function. Interacts with Nucleoprotein.

It is found in the host Golgi apparatus membrane. Its function is as follows. Plays a central role in virus morphogenesis and assembly. Acts as a viroporin and self-assembles in host membranes forming pentameric protein-lipid pores that allow ion transport. Also plays a role in the induction of apoptosis. In Gallus gallus (Chicken), this protein is Envelope small membrane protein.